The primary structure comprises 238 residues: Ribonuclease PH (238 aa).

Residues Arg86 and 124-126 each bind phosphate; that span reads GTR.

Belongs to the RNase PH family. Homohexameric ring arranged as a trimer of dimers.

It catalyses the reaction tRNA(n+1) + phosphate = tRNA(n) + a ribonucleoside 5'-diphosphate. Functionally, phosphorolytic 3'-5' exoribonuclease that plays an important role in tRNA 3'-end maturation. Removes nucleotide residues following the 3'-CCA terminus of tRNAs; can also add nucleotides to the ends of RNA molecules by using nucleoside diphosphates as substrates, but this may not be physiologically important. Probably plays a role in initiation of 16S rRNA degradation (leading to ribosome degradation) during starvation. The protein is Ribonuclease PH of Psychrobacter arcticus (strain DSM 17307 / VKM B-2377 / 273-4).